Reading from the N-terminus, the 304-residue chain is C-type lectin domain family 10 member A (304 aa).

Residues 1–35 (MIYENLQNSRIEEKTQEPGKAPSQSFLWRILSWTH) lie on the Cytoplasmic side of the membrane. The chain crosses the membrane as a helical; Signal-anchor for type II membrane protein span at residues 36–56 (LLLFSLGLSLLLLVVVSVIGS). Residues 57 to 304 (QNSQLRRDLG…ICEMKLAKES (248 aa)) lie on the Extracellular side of the membrane. 2 N-linked (GlcNAc...) asparagine glycosylation sites follow: asparagine 74 and asparagine 166. In terms of domain architecture, C-type lectin spans 172–298 (CCPLHWTEHE…QRTFRWICEM (127 aa)). 3 disulfide bridges follow: cysteine 173-cysteine 184, cysteine 201-cysteine 296, and cysteine 274-cysteine 288.

In terms of assembly, homooligomer. Interacts with SIGLEC1, which may act as a counter-receptor for CLEC10A in lymph node. In terms of tissue distribution, detected in lymph node in the subcapsular sinus, interfollicular regions, T and B-cell boundary and in the areas surrounding high endothelial venules (at protein level). Expressed on the surface of activated macrophages. Expressed in heart, lung, testis, skeletal muscle, spleen, brain, kidney and thymus. Expressed in P388, RAW 264.7 and M1 cell lines.

Its subcellular location is the membrane. In terms of biological role, recognizes terminal galactose and N-acetylgalactosamine units. May participate in the interaction between tumoricidal macrophages and tumor cells. Plays a role in the recruitment of inflammatory monocytes to adipose tissue in diet-induced obesity. The sequence is that of C-type lectin domain family 10 member A (Clec10a) from Mus musculus (Mouse).